The following is a 238-amino-acid chain: MSQSLIVALDFPGKQDVEQFLRHFEGEELFVKVGMELFYKEGPAIITYLKEKGHKIFLDLKLHDIPNTVKSAMRSLASLDVDMVNVHAAGGSSMMKAAIEGLEEGKQEGKERPICIAVTQLTSTSEAMMKKEIGIEKTLEEAVAHYAKLTKESGLDGVVCSTLEVPKLREVCGNEFVTVTPGIRLASDDVNDQVRVATPKRARELGSSYIVVGRSITKAENPLEAYKTVKQQWEGVTV.

Residues D10, K32, D59–T68, T122, R184, Q193, G213, and R214 contribute to the substrate site. K61 functions as the Proton donor in the catalytic mechanism.

This sequence belongs to the OMP decarboxylase family. Type 1 subfamily. As to quaternary structure, homodimer.

It catalyses the reaction orotidine 5'-phosphate + H(+) = UMP + CO2. Its pathway is pyrimidine metabolism; UMP biosynthesis via de novo pathway; UMP from orotate: step 2/2. In terms of biological role, catalyzes the decarboxylation of orotidine 5'-monophosphate (OMP) to uridine 5'-monophosphate (UMP). This chain is Orotidine 5'-phosphate decarboxylase, found in Bacillus cereus (strain ATCC 10987 / NRS 248).